A 54-amino-acid chain; its full sequence is Preprotein translocase subunit SecG (54 aa).

Residues 1–30 (MSKNKQDAGLSTSAGLVRYMDEDASKIKIA) lie on the Cytoplasmic side of the membrane. A helical membrane pass occupies residues 31–52 (PEKVLGITISIMVLLFILNYGL). Over 53–54 (LA) the chain is Extracellular.

This sequence belongs to the SEC61-beta family. In terms of assembly, component of the protein translocase complex. Heterotrimer consisting of alpha (SecY), beta (SecG) and gamma (SecE) subunits. Can form oligomers of the heterotrimer.

The protein localises to the cell membrane. Involved in protein export. The function of the beta subunit is unknown, but it may be involved in stabilization of the trimeric complex. The protein is Preprotein translocase subunit SecG of Methanococcus aeolicus (strain ATCC BAA-1280 / DSM 17508 / OCM 812 / Nankai-3).